Here is a 417-residue protein sequence, read N- to C-terminus: MRYLWLFLIHTIGLFATDKTLDIIKTIQKLPKIEVRYSIDNDANYALKLHEVLANDLKTSQHFDVSQNKDQGAINYAELKDKKVHLVALVSVAVENGNKISRLKLYDVDTGTLKKTFDYPIVSLDLYPFAAHNMAIVVNDYLKAPSIAWMKRLIVFSKYIGPGITNIALADYTMRYQKEIIKNNRLNIFPKWANAEQTEFYYTQYGERTPMILKYNIQKATHENIASSQGMAVVSSVSSDGSKILMSLAPDGQPDVYLYDTHKKTKTKITRYPGIDVSGVFLEDDKSMAFVSDRSGYPNIYMKKLGLKESAEQLLYEGRSNESIDAYKDSIVYVSRENLNEFGKTVFNLNLITLNSKYIRRLTVNGSNQMPRFSTDGRNIMYIKKTPQEYAMGLILLDYNQSFLFPLKNVKIQAFDW.

The N-terminal stretch at 1–16 (MRYLWLFLIHTIGLFA) is a signal peptide.

This sequence belongs to the TolB family. In terms of assembly, the Tol-Pal system is composed of five core proteins: the inner membrane proteins TolA, TolQ and TolR, the periplasmic protein TolB and the outer membrane protein Pal. They form a network linking the inner and outer membranes and the peptidoglycan layer.

The protein resides in the periplasm. Part of the Tol-Pal system, which plays a role in outer membrane invagination during cell division and is important for maintaining outer membrane integrity. In Helicobacter pylori (strain ATCC 700392 / 26695) (Campylobacter pylori), this protein is Tol-Pal system protein TolB.